Consider the following 64-residue polypeptide: Bacteriocin glycocin F (64 aa).

A signal peptide spans 1–21 (MSKLVKTLTISEISKAQNNGG). Disulfide bonds link Cys-26-Cys-49 and Cys-33-Cys-42. The O-linked (GlcNAc) serine glycan is linked to Ser-39. A glycan (S-linked (GlcNAc) cysteine) is linked at Cys-64.

Its subcellular location is the secreted. Has antibacterial activity against L.plantarum ATCC 8014. In purified form, the activity is bacteriostatic (IC(50)=2 nM) rather than bactericidal. The chain is Bacteriocin glycocin F from Lactiplantibacillus plantarum (Lactobacillus plantarum).